A 211-amino-acid polypeptide reads, in one-letter code: Metalloproteinase inhibitor 3 (211 aa).

The N-terminal stretch at 1-23 (MTPWLGLVVLLSCWSLGHWGAEA) is a signal peptide. Residue C24 coordinates Zn(2+). Involved in metalloproteinase-binding regions lie at residues 24–27 (CTCS) and 88–89 (ES). 6 cysteine pairs are disulfide-bonded: C24/C91, C26/C118, C36/C143, C145/C192, C150/C155, and C163/C184. Positions 24–143 (CTCSPSHPQD…GLNYRYHLGC (120 aa)) constitute an NTR domain. Residues 105–188 (TGRVYEGKMY…SKHYACIRQK (84 aa)) form a mediates interaction with EFEMP1 region.

The protein belongs to the protease inhibitor I35 (TIMP) family. As to quaternary structure, interacts with EFEMP1. Interacts with KDR. In terms of tissue distribution, highest levels are found in kidney, lung and brain followed by ovary and uterus. Low levels are found in bone.

It is found in the secreted. The protein resides in the extracellular space. Its subcellular location is the extracellular matrix. In terms of biological role, mediates a variety of processes including matrix regulation and turnover, inflammation, and angiogenesis, through reversible inhibition of zinc protease superfamily enzymes, primarily matrix metalloproteinases (MMPs). Regulates extracellular matrix (ECM) remodeling through inhibition of matrix metalloproteinases (MMP) including MMP-1, MMP-2, MMP-3, MMP-7, MMP-9, MMP-13, MMP-14 and MMP-15. Additionally, modulates the processing of amyloid precursor protein (APP) and apolipoprotein E receptor ApoER2 by inhibiting two alpha-secretases ADAM10 and ADAM17. Functions as a tumor suppressor and a potent inhibitor of angiogenesis. Exerts its anti-angiogenic effect by directly interacting with vascular endothelial growth factor (VEGF) receptor-2/KDR, preventing its binding to the VEGFA ligand. Selectively induces apoptosis in angiogenic endothelial cells through a caspase-independent cell death pathway. Mechanistically, inhibits matrix-induced focal adhesion kinase PTK2 tyrosine phosphorylation and association with paxillin/PXN and disrupts the incorporation of ITGB3, PTK2 and PXN into focal adhesion contacts on the matrix. The chain is Metalloproteinase inhibitor 3 (Timp3) from Mus musculus (Mouse).